A 704-amino-acid polypeptide reads, in one-letter code: Transcription factor HNF-4 homolog (704 aa).

Residues 93-133 form a disordered region; sequence SAGGGSASSGSNNNNSMFSPNNNLSGSGSGTNSSQQQLQQQ. The span at 100–133 shows a compositional bias: low complexity; that stretch reads SSGSNNNNSMFSPNNNLSGSGSGTNSSQQQLQQQ. The nuclear receptor DNA-binding region spans 139–214; that stretch reads PTVCAICGDR…AGMKKEAVQN (76 aa). 2 NR C4-type zinc fingers span residues 142-162 and 178-197; these read CAIC…CDGC and CRFA…CRYC. Positions 232–470 constitute an NR LBD domain; the sequence is GNGLSVISLV…SLLQEMLLGG (239 aa). 3 disordered regions span residues 474 to 520, 563 to 624, and 684 to 704; these read DNPL…GSHS, PASV…QRMH, and PAGY…ETGY. The span at 487 to 512 shows a compositional bias: polar residues; sequence DYQSPTHTGNMEGGNQVNSSLDSLAT. A compositionally biased stretch (low complexity) spans 563–574; sequence PASVAPASISPP. Residues 608–620 are compositionally biased toward polar residues; the sequence is GSRSGPLPTQHSP.

Belongs to the nuclear hormone receptor family. NR2 subfamily. As to quaternary structure, homodimer. As to expression, in third instar larvae, expressed at high levels in midgut and attached gastric caeca, fat body, Malpighian tubules and oenocytes, and at lower levels in proventriculus, salivary glands, epidermis, brain and ring gland. Not detected in imaginal disks and the median neurosecretory cells that produce insulin-like peptides (at protein level). In developing embryos, expressed in mid-gut, fat bodies and the distal region of Malpighian tubules.

The protein localises to the nucleus. Its function is as follows. Transcriptionally controlled transcription factor. Important for the differentiation of various specialized cell types that arise from both endoderm and mesoderm. May have a role in early gut formation. Plays an essential role in lipid catabolism, regulating lipid mobilization and beta-oxidation in response to nutrient deprivation. This is Transcription factor HNF-4 homolog (Hnf4) from Drosophila melanogaster (Fruit fly).